We begin with the raw amino-acid sequence, 71 residues long: General transcription and DNA repair factor IIH subunit TFB5 (71 aa).

Belongs to the TFB5 family. Component of the 7-subunit TFIIH core complex.

It is found in the nucleus. It localises to the chromosome. Functionally, component of the general transcription and DNA repair factor IIH (TFIIH) core complex, which is involved in general and transcription-coupled nucleotide excision repair (NER) of damaged DNA and in RNA transcription by RNA polymerase II. In NER, TFIIH acts by opening DNA around the lesion to allow the excision of the damaged oligonucleotide and its replacement by a new DNA fragment. In transcription, TFIIH has an essential role in transcription initiation. When the pre-initiation complex (PIC) has been established, TFIIH is required for promoter opening and promoter escape. Necessary for the stability of the TFIIH complex and for the presence of normal levels of TFIIH in the cell. Required for efficient binding of TFIIH to damaged DNA. Dispensable for normal development, but required when transcription is challenged. This is General transcription and DNA repair factor IIH subunit TFB5 from Caenorhabditis elegans.